The chain runs to 41 residues: Photosystem II reaction center protein Y (41 aa).

A helical membrane pass occupies residues 7-25; that stretch reads VAIVLAPIAVAAGWAAFNI.

This sequence belongs to the PsbY family. As to quaternary structure, PSII is composed of 1 copy each of membrane proteins PsbA, PsbB, PsbC, PsbD, PsbE, PsbF, PsbH, PsbI, PsbJ, PsbK, PsbL, PsbM, PsbT, PsbX, PsbY, PsbZ, Psb30/Ycf12, peripheral proteins PsbO, CyanoQ (PsbQ), PsbU, PsbV and a large number of cofactors. It forms dimeric complexes.

The protein localises to the cellular thylakoid membrane. Functionally, loosely associated component of the core of photosystem II (PSII), it is not always seen in crystals. PSII is a light-driven water plastoquinone oxidoreductase, using light energy to abstract electrons from H(2)O, generating a proton gradient subsequently used for ATP formation. The sequence is that of Photosystem II reaction center protein Y from Nostoc sp. (strain PCC 7120 / SAG 25.82 / UTEX 2576).